The chain runs to 2588 residues: MDRTCELSRRNCLLSFSNPVNLDASEDKDSPFGNGQSNFSEPLNGCTMQLPTAASGTSQNAYGQDSPSCYIPLRRLQDLASMINVEYLSGSADGSESFQDPAKSDSRAQSPIVCTSLSPGGPTALAMKQEPTCNNSPELQLRVTKTTKNGFLHFENFTGVDDADVDSEMDPEQPVTEDESIEEIFEETQTNATCNYEPKSENGVEVAMGSEQDSMPESRHGAVERPFLPLAPQTEKQKNKQRSEVDGSNEKTALLPAPTSLGDTNVTVEEQFNSINLSFQDDPDSSPSPLGNMLEIPGTSSPSTSQELPFVPQKILSKWEASVGLAEQYDVPKGSKNQKCVSSSVKLDSEEDMPFEDCTNDPDSEHLLLNGCLKSLAFDSEHSADEKEKPCAKSRVRKSSDNIKRTSVKKDLVPFESRKEERRGKIPDNLGLDFISGGVSDKQASNELSRIANSLTGSSTAPGSFLFSSSVQNTAKTDFETPDCDSLSGLSESALISKHSGEKKKLHPGQVCSSKVQLCYVGAGDEEKRSNSVSVSTTSDDGCSDLDPTEHNSGFQNSVLGITDAFDKTENALSVHKNETQYSRYPVTNRIKEKQKSLITNSHADHLMGSTKTMEPETAELSQVNLSDLKISSPIPKPQPEFRNDGLTTKFSAPPGIRNENPLTKGGLANQTLLPLKCRQPKFRSIKCKHKESPAVAETSATSEDLSLKCCSSDTNGSPLANISKSGKGEGLKLLNNMHEKTRDSSDIETAVVKHVLSELKELSYRSLSEDVSDSGTAKASKPLLFSSASSQNHIPIEPDYKFSTLLMMLKDMHDSKTKEQRLMTAQNLASYRTPDRGDCSSGSPVGTSKVLVLGSSTPNSEKPGDSTQDSVHQSPGGGDSALSGELSSSLSSLASDKRELPACGKIRSNCIPRRNCGRAKPSSKLRETISAQMVKPSVNPKALKTERKRKFSRLPAVTLAANRLGNKESGSVNGPSRGGAEDPGKEEPLQQMDLLRNEDTHFSDVHFDSKAKQSDPDKNLEKEPSFENRKGPELGSEMNTENDELHGVNQVVPKKRWQRLNQRRPKPGKRANRFREKENSEGAFGVLLPADAVQKAREDYLEQRAPPTSKPEDSAADPNHGSHSESVAPRLNVCEKSSVGMGDVEKETGIPSLMPQTKLPEPAIRSEKKRLRKPSKWLLEYTEEYDQIFAPKKKQKKVQEQVHKVSSRCEDESLLARCQPSAQNKQVDENSLISTKEEPPVLEREAPFLEGPLAQSDLGVTHAELPQLTLSVPVAPEASPRPALESEELLVKTPGNYESKRQRKPTKKLLESNDLDPGFMPKKGDLGLSRKCFEASRSGNGIVESRATSHLKEFSGGTTKIFDKPRKRKRQRLVTARVHYKKVKKEDLTKDTPSSEGELLIHRTAASPKEILEEGVEHDPGMSASKKLQVERGGGAALKENVCQNCEKLGELLLCEAQCCGAFHLECLGLPEMPRGKFICNECHTGIHTCFVCKQSGEDVKRCLLPLCGKFYHEECVQKYPPTVTQNKGFRCPLHICITCHAANPANVSASKGRLMRCVRCPVAYHANDFCLAAGSKILASNSIICPNHFTPRRGCRNHEHVNVSWCFVCSEGGSLLCCDSCPAAFHRECLNIDIPEGNWYCNDCKAGKKPHYREIVWVKVGRYRWWPAEICHPRAVPSNIDKMRHDVGEFPVLFFGSNDYLWTHQARVFPYMEGDVSSKDKMGKGVDGTYKKALQEAAARFEELKARKELRQLQEDRKNDKKPPPYKHIKVNRPIGRVQIFTADLSEIPRCNCKATDENPCGIDSECINRMLLYECHPTVCPAGVRCQNQCFSKRQYPDVEIFRTLQRGWGLRTKTDIKKGEFVNEYVGELIDEEECRARIRYAQEHDITNFYMLTLDKDRIIDAGPKGNYARFMNHCCQPNCETQKWSVNGDTRVGLFALSDIKAGTELTFNYNLECLGNGKTVCKCGAPNCSGFLGVRPKNQPIVTEEKSRKFKRKPHGKRRSQGEVTKEREDECFSCGDAGQLVSCKKPGCPKVYHADCLNLTKRPAGKWECPWHQCDVCGKEAASFCEMCPSSFCKQHREGMLFISKLDGRLSCTEHDPCGPNPLEPGEIREYVPPTATSPPSPGTQPKEQSSEMATQGPKKSDQPPTDATQLLPLSKKALTGSCQRPLLPERPPERTDSSSHLLDRIRDLAGSGTKSQSLVSSQRPQDRPPAKEGPRPQPPDRASPMTRPSSSPSVSSLPLERPLRMTDSRLDKSIGAASPKSQAVEKTPASTGLRLSSPDRLLTTNSPKPQISDRPPEKSHASLTQRLPPPEKVLSAVVQSLVAKEKALRPVDQNTQSKHRPAVVMDLIDLTPRQKERAASPQEVTPQADEKTAMLESSSWPSSKGLGHIPRATEKISVSESLQPSGKVAAPSEHPWQAVKSLTHARFLSPPSAKAFLYESATQASGRTPVGAEQTPGPPSPAPGLVKQVKQLSRGLTAKSGQSFRSLGKISASLPNEEKKLTTTEQSPWGLGKASPGAGLWPIVAGQTLAQACWSAGGTQTLAQTCWSLGRGQDPKPENAIQALNQAPSSRKCADSEKK.

Phosphoserine occurs at positions 110 and 118. 2 disordered regions span residues 209–264 and 277–307; these read GSEQ…LGDT and LSFQDDPDSSPSPLGNMLEIPGTSSPSTSQE. Residues 235–249 show a composition bias toward basic and acidic residues; sequence EKQKNKQRSEVDGSN. Residues 298–307 show a composition bias toward polar residues; sequence GTSSPSTSQE. Ser380 and Ser383 each carry phosphoserine. Positions 383-403 are disordered; that stretch reads SADEKEKPCAKSRVRKSSDNI. Lys802 is covalently cross-linked (Glycyl lysine isopeptide (Lys-Gly) (interchain with G-Cter in SUMO2)). 3 disordered regions span residues 830–899, 947–987, and 1008–1133; these read ASYR…SDKR, ERKR…PGKE, and FDSK…PRLN. Polar residues predominate over residues 855–874; sequence GSSTPNSEKPGDSTQDSVHQ. Over residues 881-895 the composition is skewed to low complexity; that stretch reads SALSGELSSSLSSLA. Basic and acidic residues predominate over residues 1008 to 1033; the sequence is FDSKAKQSDPDKNLEKEPSFENRKGP. Positions 1054–1073 are enriched in basic residues; sequence PKKRWQRLNQRRPKPGKRAN. Lys1237 participates in a covalent cross-link: Glycyl lysine isopeptide (Lys-Gly) (interchain with G-Cter in SUMO2). The tract at residues 1279–1324 is disordered; it reads ASPRPALESEELLVKTPGNYESKRQRKPTKKLLESNDLDPGFMPKK. Phosphoserine is present on Ser1408. 3 consecutive PHD-type zinc fingers follow at residues 1441–1487, 1488–1544, and 1605–1649; these read ENVC…CHTG, IHTC…CHAA, and VSWC…CKAG. Positions 1654–1716 constitute a PWWP domain; sequence YREIVWVKVG…QARVFPYMEG (63 aa). The AWS domain occupies 1788–1838; the sequence is SEIPRCNCKATDENPCGIDSECINRMLLYECHPTVCPAGVRCQNQCFSKRQ. The SET domain maps to 1840-1957; it reads PDVEIFRTLQ…AGTELTFNYN (118 aa). Residues 1850–1852, 1892–1895, 1918–1919, Asn1963, and Lys1969 contribute to the S-adenosyl-L-methionine site; these read RGW, TNFY, and NH. Residues 1958–1964 form an inhibits enzyme activity in the absence of bound histone region; the sequence is LECLGNG. The Post-SET domain maps to 1964–1980; it reads GKTVCKCGAPNCSGFLG. The segment at 1989–2010 is disordered; that stretch reads VTEEKSRKFKRKPHGKRRSQGE. Positions 1995–2006 are enriched in basic residues; the sequence is RKFKRKPHGKRR. The PHD-type 4; atypical zinc-finger motif lies at 2016-2063; that stretch reads EDECFSCGDAGQLVSCKKPGCPKVYHADCLNLTKRPAGKWECPWHQCD. Disordered regions lie at residues 2105–2320, 2333–2423, 2447–2521, and 2560–2588; these read PCGP…PPPE, KEKA…PSEH, YESA…WGLG, and RGQDPKPENAIQALNQAPSSRKCADSEKK. Residues 2179 to 2196 show a composition bias toward basic and acidic residues; that stretch reads RPPERTDSSSHLLDRIRD. A compositionally biased stretch (polar residues) spans 2201 to 2212; sequence GTKSQSLVSSQR. Over residues 2213-2223 the composition is skewed to basic and acidic residues; it reads PQDRPPAKEGP. Low complexity predominate over residues 2232–2249; that stretch reads SPMTRPSSSPSVSSLPLE. The span at 2250 to 2261 shows a compositional bias: basic and acidic residues; that stretch reads RPLRMTDSRLDK. Ser2267 bears the Phosphoserine mark. Thr2360 is modified (phosphothreonine). Ser2369 carries the post-translational modification Phosphoserine. Lys2509 is covalently cross-linked (Glycyl lysine isopeptide (Lys-Gly) (interchain with G-Cter in SUMO2)).

The protein belongs to the class V-like SAM-binding methyltransferase superfamily. Interacts with AR DNA- and ligand-binding domains. Interacts with the ligand-binding domains of RARA and THRA in the absence of ligand; in the presence of ligand the interaction is severely disrupted but some binding still occurs. Interacts with the ligand-binding domains of RXRA and ESRRA only in the presence of ligand. Interacts with ZNF496. Expressed in the embryo and the outer region of the uterine decidua at early post-implantation 5.5 dpc stage. Uniformly expressed in embryonic and extraembryonic tissues during gastrulation stage 7.5 dpc. Expressed differentially after stage 14.5 dpc with highest expression in proliferating cells. Enriched in the telencephalic region of the brain, spinal cord, intestinal crypt, tooth buds, thymus and salivary glands at stage 16.5 dpc. Also expressed in the ossification region of developing bones and in the periosteum.

The protein resides in the nucleus. It is found in the chromosome. It carries out the reaction L-lysyl(36)-[histone H3] + 2 S-adenosyl-L-methionine = N(6),N(6)-dimethyl-L-lysyl(36)-[histone H3] + 2 S-adenosyl-L-homocysteine + 2 H(+). Functionally, histone methyltransferase that dimethylates Lys-36 of histone H3 (H3K36me2). Transcriptional intermediary factor capable of negatively influencing transcription. May also positively influence transcription. Essential for early post-implantation development. The chain is Histone-lysine N-methyltransferase, H3 lysine-36 specific from Mus musculus (Mouse).